A 766-amino-acid polypeptide reads, in one-letter code: Probable beta-glucosidase K (766 aa).

A glycan (N-linked (GlcNAc...) asparagine) is linked at Asn-19. Residue Asp-196 is part of the active site. N-linked (GlcNAc...) asparagine glycans are attached at residues Asn-288, Asn-453, and Asn-748. The PA14 domain occupies Glu-369–Val-528. A disordered region spans residues Leu-726–Arg-766. A compositionally biased stretch (polar residues) spans Arg-742 to Gln-756.

This sequence belongs to the glycosyl hydrolase 3 family.

It is found in the secreted. It catalyses the reaction Hydrolysis of terminal, non-reducing beta-D-glucosyl residues with release of beta-D-glucose.. The protein operates within glycan metabolism; cellulose degradation. In terms of biological role, beta-glucosidases are one of a number of cellulolytic enzymes involved in the degradation of cellulosic biomass. Catalyzes the last step releasing glucose from the inhibitory cellobiose. The chain is Probable beta-glucosidase K (bglK) from Aspergillus fumigatus (strain CBS 144.89 / FGSC A1163 / CEA10) (Neosartorya fumigata).